The primary structure comprises 291 residues: Lipoyl synthase, organellar chromatophore (291 aa).

[4Fe-4S] cluster-binding residues include C33, C38, C44, C59, C63, C66, and S274. The region spanning 45 to 263 (FAGGTATFLI…AIGELEMNFL (219 aa)) is the Radical SAM core domain.

It belongs to the radical SAM superfamily. Lipoyl synthase family. [4Fe-4S] cluster serves as cofactor.

It is found in the plastid. Its subcellular location is the organellar chromatophore. It carries out the reaction [[Fe-S] cluster scaffold protein carrying a second [4Fe-4S](2+) cluster] + N(6)-octanoyl-L-lysyl-[protein] + 2 oxidized [2Fe-2S]-[ferredoxin] + 2 S-adenosyl-L-methionine + 4 H(+) = [[Fe-S] cluster scaffold protein] + N(6)-[(R)-dihydrolipoyl]-L-lysyl-[protein] + 4 Fe(3+) + 2 hydrogen sulfide + 2 5'-deoxyadenosine + 2 L-methionine + 2 reduced [2Fe-2S]-[ferredoxin]. Its pathway is protein modification; protein lipoylation via endogenous pathway; protein N(6)-(lipoyl)lysine from octanoyl-[acyl-carrier-protein]: step 2/2. Functionally, catalyzes the radical-mediated insertion of two sulfur atoms into the C-6 and C-8 positions of the octanoyl moiety bound to the lipoyl domains of lipoate-dependent enzymes, thereby converting the octanoylated domains into lipoylated derivatives. The chain is Lipoyl synthase, organellar chromatophore from Paulinella chromatophora.